We begin with the raw amino-acid sequence, 396 residues long: Smad nuclear-interacting protein 1 (396 aa).

Positions 1-10 (MKAVKSERER) are enriched in basic and acidic residues. The disordered stretch occupies residues 1 to 227 (MKAVKSERER…VPAKEKPSFE (227 aa)). Lys30 is covalently cross-linked (Glycyl lysine isopeptide (Lys-Gly) (interchain with G-Cter in SUMO); alternate). Lys30 participates in a covalent cross-link: Glycyl lysine isopeptide (Lys-Gly) (interchain with G-Cter in SUMO1); alternate. Lys30 participates in a covalent cross-link: Glycyl lysine isopeptide (Lys-Gly) (interchain with G-Cter in SUMO2); alternate. Ser35, Ser49, Ser52, and Ser54 each carry phosphoserine. Thr57 bears the Phosphothreonine mark. Residues Ser58 and Ser99 each carry the phosphoserine modification. The span at 77 to 105 (PPKKKNKASGRRSKSPRSKRNRSPHHSTV) shows a compositional bias: basic residues. The segment covering 107 to 142 (VKQEREDHPRRGREDRQHREPSEQEHRRARNSDRDR) has biased composition (basic and acidic residues). A Glycyl lysine isopeptide (Lys-Gly) (interchain with G-Cter in SUMO2) cross-link involves residue Lys108. Ser153 carries the post-translational modification Phosphoserine. Residues 165 to 196 (RDRDTQNLQAQEEEREFYNARRREHRQRNDVG) are a coiled coil. A Phosphoserine modification is found at Ser202. A compositionally biased stretch (basic and acidic residues) spans 213 to 225 (NKEKEVPAKEKPS). Lys223 is covalently cross-linked (Glycyl lysine isopeptide (Lys-Gly) (interchain with G-Cter in SUMO2)). The 64-residue stretch at 281 to 344 (YLLGRHRRIA…NGTFLNNKRI (64 aa)) folds into the FHA domain. Basic and acidic residues predominate over residues 373 to 382 (SSDTSEIDRK). The disordered stretch occupies residues 373-396 (SSDTSEIDRKDDEDEEEEEEVSDS). Acidic residues predominate over residues 383–396 (DDEDEEEEEEVSDS). Position 394 is a phosphoserine (Ser394).

As to quaternary structure, component of activated spliceosome complexes. Component of the minor spliceosome, which splices U12-type introns. Binds SMAD4 and CREBBP/EP300. Binds the SMAD1/OAZ1/PSMB4 complex. Interacts with DROSHA and SMARCA4. Component of the SNARP complex which consists at least of SNIP1, SNW1, THRAP3, BCLAF1 and PNN. In terms of processing, degraded by the proteasome upon binding to the SMAD1/OAZ1/PSMB4 complex. In terms of tissue distribution, ubiquitous, with highest expression in heart and skeletal muscle.

The protein localises to the nucleus. Its function is as follows. Required for pre-mRNA splicing as component of the spliceosome. As a component of the minor spliceosome, involved in the splicing of U12-type introns in pre-mRNAs. Down-regulates NF-kappa-B signaling by competing with RELA for CREBBP/EP300 binding. Involved in the microRNA (miRNA) biogenesis. May be involved in cyclin-D1/CCND1 mRNA stability through the SNARP complex which associates with both the 3'end of the CCND1 gene and its mRNA. The protein is Smad nuclear-interacting protein 1 (SNIP1) of Homo sapiens (Human).